A 201-amino-acid chain; its full sequence is Ciliary microtubule inner protein 2C (201 aa).

This sequence belongs to the CIMIP2 family. As to quaternary structure, microtubule inner protein component of sperm flagellar doublet microtubules.

It is found in the cytoplasm. The protein resides in the cytoskeleton. Its subcellular location is the cilium axoneme. The protein localises to the flagellum axoneme. Microtubule inner protein (MIP) part of the dynein-decorated doublet microtubules (DMTs) in cilia axoneme, which is required for motile cilia beating. Binds to the intra-tubulin interfaces. The polypeptide is Ciliary microtubule inner protein 2C (CIMIP2C) (Bos taurus (Bovine)).